Consider the following 617-residue polypeptide: Procollagen galactosyltransferase 1 (617 aa).

An N-terminal signal peptide occupies residues 1–31; that stretch reads MAALPRGSRGLPLLPLLLLLPPLGGPRGADG. 3 N-linked (GlcNAc...) asparagine glycosylation sites follow: N91, N179, and N376. Over residues 582–601 the composition is skewed to basic and acidic residues; it reads DRAKSQKMREQQALSREAKN. The segment at 582 to 617 is disordered; it reads DRAKSQKMREQQALSREAKNSDVLQSPLDSTARDEL. The Prevents secretion from ER motif lies at 614 to 617; that stretch reads RDEL.

It belongs to the glycosyltransferase 25 family. Post-translationally, N-glycosylated.

It localises to the endoplasmic reticulum lumen. It catalyses the reaction (5R)-5-hydroxy-L-lysyl-[collagen] + UDP-alpha-D-galactose = (5R)-5-O-(beta-D-galactosyl)-5-hydroxy-L-lysyl-[collagen] + UDP + H(+). Functionally, beta-galactosyltransferase that transfers beta-galactose to hydroxylysine residues of type I collagen. By acting on collagen glycosylation, facilitates the formation of collagen triple helix. Also involved in the biosynthesis of collagen type IV. This chain is Procollagen galactosyltransferase 1 (Colgalt1), found in Mus musculus (Mouse).